Here is a 196-residue protein sequence, read N- to C-terminus: Nucleoid occlusion factor SlmA (196 aa).

In terms of domain architecture, HTH tetR-type spans isoleucine 7–leucine 68. Residues threonine 31–phenylalanine 50 constitute a DNA-binding region (H-T-H motif). A coiled-coil region spans residues histidine 110–arginine 139.

It belongs to the nucleoid occlusion factor SlmA family. In terms of assembly, homodimer. Interacts with FtsZ.

The protein resides in the cytoplasm. It localises to the nucleoid. Its function is as follows. Required for nucleoid occlusion (NO) phenomenon, which prevents Z-ring formation and cell division over the nucleoid. Acts as a DNA-associated cell division inhibitor that binds simultaneously chromosomal DNA and FtsZ, and disrupts the assembly of FtsZ polymers. SlmA-DNA-binding sequences (SBS) are dispersed on non-Ter regions of the chromosome, preventing FtsZ polymerization at these regions. This is Nucleoid occlusion factor SlmA from Vibrio cholerae serotype O1 (strain ATCC 39315 / El Tor Inaba N16961).